The chain runs to 677 residues: Zinc finger CCCH domain-containing protein 23 (677 aa).

Positions 66–117 (PPQAASSSPTVPAAHSPFLLSRQNSGRCPAPSPSSWAQAQPFSRSNSMGNGG) are disordered. The span at 69-82 (AASSSPTVPAAHSP) shows a compositional bias: low complexity. The segment covering 98 to 113 (PSSWAQAQPFSRSNSM) has biased composition (polar residues). The C3H1-type zinc-finger motif lies at 228 to 255 (GFGWKPCLYYARGFCKNGSTCRFVHGGL). The RRM domain occupies 359–435 (RQIYLTFPAD…RVLVKPYKEK (77 aa)). Residues 480 to 513 (ANELMLRRKLEEQQQAAELQQAIDLHSRRLIGLQ) are a coiled coil. A compositionally biased stretch (polar residues) spans 535–562 (TPITNAFTSGQPGATTIVESPPSSTGQL). Positions 535–607 (TPITNAFTSG…EHNLPDSPFA (73 aa)) are disordered. Over residues 589–601 (RNADSDQSGEHNL) the composition is skewed to basic and acidic residues.

The chain is Zinc finger CCCH domain-containing protein 23 from Oryza sativa subsp. japonica (Rice).